The primary structure comprises 693 residues: Protein FAM13A (693 aa).

Serine 19 is subject to Phosphoserine. Disordered stretches follow at residues 56-89 (SNAG…KKQD) and 136-233 (RSKP…VPDM). Polar residues predominate over residues 69–78 (GPSSASSIPT). Residues 159–171 (LSMESLSSMQSQE) show a composition bias toward low complexity. Residues 184-197 (ESKEIERGGRDTQH) are compositionally biased toward basic and acidic residues. Phosphoserine is present on residues serine 267 and serine 287. Disordered regions lie at residues 302–331 (DTEV…DEQE) and 396–424 (ISEE…EKED). Phosphoserine is present on serine 397. A Phosphothreonine modification is found at threonine 402. Positions 408-418 (RSNTLPKSFGS) are enriched in polar residues.

Belongs to the FAM13 family. Interacts with ANXA2. In terms of tissue distribution, expressed in the mammary gland, with similar levels at all stages of development, including pregnancy, lactation and involution.

(Microbial infection) Plays a role in the clearance of Pseudomonas aeruginosa by macrophages. In complex with ANXA2, promotes activation of Rho GTPases following P.aeruginosa infection. This Mus musculus (Mouse) protein is Protein FAM13A (Fam13a).